Consider the following 354-residue polypeptide: UPF0283 membrane protein Meso_1416 (354 aa).

Residues 1-28 form a disordered region; it reads MSEPRRPAAFRIEPAPSPSPEATREDVR. The next 2 helical transmembrane spans lie at 71-91 and 105-125; these read LGAV…GLWA and LGWL…AIVV.

This sequence belongs to the UPF0283 family.

Its subcellular location is the cell inner membrane. This Chelativorans sp. (strain BNC1) protein is UPF0283 membrane protein Meso_1416.